A 111-amino-acid chain; its full sequence is uncharacterized protein (111 aa).

Residues 1–85 (MTGLMKAFQK…TSSREDEQKL (85 aa)) form a disordered region. Residues 11 to 23 (LSPTKRQYAEITQ) show a composition bias toward polar residues. A compositionally biased stretch (low complexity) spans 24–42 (SNSSISSSSSGSKYNDSSS). Residues 56–77 (ARASTSTQAQKPASSQQKGGTS) are compositionally biased toward polar residues.

This is an uncharacterized protein from Microplitis demolitor (Parasitoid wasp).